Reading from the N-terminus, the 449-residue chain is MKSAVETLSPTRVKFTVEVGFDELQPTVAAAYRKVAEQVRVPGFRPGKVPPPIIDRRIGRGVVLEQALNDAIPQFYGQAVDEAAVAVISQPEIEVTNFADGEGLTFTAEVDVRPTIELPDPESITVTVDPVTVSDADVDAELAALADRFATLKPVDRPARRGDFVTIDMTVRLDGEVLEDGTVTGASYEVGSAQLVEGLDEALEGLTAGQSAEFDAPLAGPYAGRTARAEVTVRAVREKQVPALDDAFAQQASEFDTLEELRAHIRERIGRTRRIQQHVQARERLLQTLLDSLDIPVPERIVDAEVRSRAEQLRRYAEARGMDAEGLLAQQGESLHDHEAHVRADVERELRVQFLLDTVVAREQLQLQEAELTDYLIQRATRLGVSPDDYANQLVRTNTVPLAVADALRGKALTYLLQRVRVVDTTGAPVNLEGGSTPAAEAEPAVSEA.

The region spanning 162–242 is the PPIase FKBP-type domain; it reads GDFVTIDMTV…VRAVREKQVP (81 aa). Residues 428-449 form a disordered region; that stretch reads APVNLEGGSTPAAEAEPAVSEA. Positions 438-449 are enriched in low complexity; that stretch reads PAAEAEPAVSEA.

This sequence belongs to the FKBP-type PPIase family. Tig subfamily.

The protein resides in the cytoplasm. It catalyses the reaction [protein]-peptidylproline (omega=180) = [protein]-peptidylproline (omega=0). Involved in protein export. Acts as a chaperone by maintaining the newly synthesized protein in an open conformation. Functions as a peptidyl-prolyl cis-trans isomerase. This is Trigger factor from Acidothermus cellulolyticus (strain ATCC 43068 / DSM 8971 / 11B).